Consider the following 303-residue polypeptide: Catechol 1,2-dioxygenase (303 aa).

The Fe cation site is built by Y156, Y191, H215, and H217.

As to quaternary structure, homodimer. Requires Fe(3+) as cofactor.

The catalysed reaction is catechol + O2 = cis,cis-muconate + 2 H(+). Its pathway is aromatic compound metabolism; beta-ketoadipate pathway; 5-oxo-4,5-dihydro-2-furylacetate from catechol: step 1/3. Its activity is regulated as follows. Inhibited by Ag(+), Cu(+), Hg(2+) and Pb(2+). Its function is as follows. Can cleave 4-methylcatechol at lower rates than catechol, but has no activity with 3-methylcatechol, 4-chlorocatechol, 4-carboxycatechol or hydroxyquinol. In Candida albicans (strain SC5314 / ATCC MYA-2876) (Yeast), this protein is Catechol 1,2-dioxygenase (HQD2).